Consider the following 242-residue polypeptide: Uridylate kinase (242 aa).

An ATP-binding site is contributed by 11–14 (KLSG). An involved in allosteric activation by GTP region spans residues 19–24 (GEKGAG). G53 is a UMP binding site. ATP contacts are provided by G54 and R58. UMP contacts are provided by residues D73 and 134–141 (IGSPYFST). ATP is bound by residues N162, Y168, and D171.

The protein belongs to the UMP kinase family. Homohexamer.

It is found in the cytoplasm. It catalyses the reaction UMP + ATP = UDP + ADP. It functions in the pathway pyrimidine metabolism; CTP biosynthesis via de novo pathway; UDP from UMP (UMPK route): step 1/1. With respect to regulation, allosterically activated by GTP. Inhibited by UTP. Its function is as follows. Catalyzes the reversible phosphorylation of UMP to UDP. This chain is Uridylate kinase, found in Streptococcus pyogenes serotype M2 (strain MGAS10270).